We begin with the raw amino-acid sequence, 184 residues long: Adenine phosphoribosyltransferase (184 aa).

This sequence belongs to the purine/pyrimidine phosphoribosyltransferase family. Homodimer.

Its subcellular location is the cytoplasm. The catalysed reaction is AMP + diphosphate = 5-phospho-alpha-D-ribose 1-diphosphate + adenine. It functions in the pathway purine metabolism; AMP biosynthesis via salvage pathway; AMP from adenine: step 1/1. Functionally, catalyzes a salvage reaction resulting in the formation of AMP, that is energically less costly than de novo synthesis. The protein is Adenine phosphoribosyltransferase of Shewanella putrefaciens (strain CN-32 / ATCC BAA-453).